Reading from the N-terminus, the 103-residue chain is Large ribosomal subunit protein uL24 (103 aa).

The protein belongs to the universal ribosomal protein uL24 family. Part of the 50S ribosomal subunit.

One of two assembly initiator proteins, it binds directly to the 5'-end of the 23S rRNA, where it nucleates assembly of the 50S subunit. Functionally, one of the proteins that surrounds the polypeptide exit tunnel on the outside of the subunit. This chain is Large ribosomal subunit protein uL24, found in Actinobacillus pleuropneumoniae serotype 5b (strain L20).